The sequence spans 442 residues: Putative nucleotide-sugar transporter YMD8 (442 aa).

Over 1–3 (MNR) the chain is Cytoplasmic. The chain crosses the membrane as a helical span at residues 4 to 24 (TVFLAFVFGWYFCSIALSIYN). Residues 25-32 (RWMFDPKD) lie on the Extracellular side of the membrane. The helical transmembrane segment at 33–53 (GLGIGYPVLVTTFHQATLWLL) threads the bilayer. The Cytoplasmic portion of the chain corresponds to 54 to 76 (SGIYIKLRHKPVKNVLRKNNGFN). A helical membrane pass occupies residues 77-97 (WSFFLKFLLPTAVASAGDIGL). The Extracellular portion of the chain corresponds to 98–107 (SNVSFQYVPL). The N-linked (GlcNAc...) asparagine glycan is linked to asparagine 99. A helical transmembrane segment spans residues 108-128 (TIYTIIKSSSIAFVLLFGCIF). Over 129–132 (KLEK) the chain is Cytoplasmic. The chain crosses the membrane as a helical span at residues 133–153 (FHWKLALSVIIMFVGVALMVF). Residues 154–166 (KPSDSTSTKNDQA) lie on the Extracellular side of the membrane. Residues 167-187 (LVIFGSFLVLASSCLSGLRWV) form a helical membrane-spanning segment. The Cytoplasmic portion of the chain corresponds to 188-254 (YTQLMLRNNP…PIHTIHQLAP (67 aa)). Serine 209 is modified (phosphoserine). A helical membrane pass occupies residues 255–275 (IMGITLLLTSLLVEKPFPGIF). The Extracellular portion of the chain corresponds to 276–301 (SSSIFRLDTSNGGVGTETTVLSIVRG). A helical membrane pass occupies residues 302–322 (IVLLILPGFAVFLLTICEFSI). The Cytoplasmic segment spans residues 323-329 (LEQTPVL). A helical membrane pass occupies residues 330-350 (TVSIVGIVKELLTVIFGIIIL). Topologically, residues 351–355 (SERLS) are extracellular. Residues 356–376 (GFYNWLGMLIIMADVCYYNYF) traverse the membrane as a helical segment. Residues 377 to 442 (RYKQDLLQKY…QNVSRSSQQV (66 aa)) lie on the Cytoplasmic side of the membrane.

It belongs to the TPT transporter family. SLC35C subfamily.

Its subcellular location is the golgi apparatus membrane. The protein localises to the cytoplasmic vesicle. It localises to the COPI-coated vesicle membrane. This chain is Putative nucleotide-sugar transporter YMD8 (YMD8), found in Saccharomyces cerevisiae (strain ATCC 204508 / S288c) (Baker's yeast).